A 133-amino-acid polypeptide reads, in one-letter code: Small ribosomal subunit protein uS8 (133 aa).

This sequence belongs to the universal ribosomal protein uS8 family. As to quaternary structure, part of the 30S ribosomal subunit.

Its function is as follows. One of the primary rRNA binding proteins, it binds directly to 16S rRNA central domain where it helps coordinate assembly of the platform of the 30S subunit. This Hyperthermus butylicus (strain DSM 5456 / JCM 9403 / PLM1-5) protein is Small ribosomal subunit protein uS8.